A 215-amino-acid chain; its full sequence is Large ribosomal subunit protein bL25 (215 aa).

Polar residues-rich tracts occupy residues 1–19 (MAKS…NTGK) and 206–215 (ENKTAATESE). Disordered regions lie at residues 1 to 29 (MAKS…RRDG) and 190 to 215 (AKYA…TESE).

Belongs to the bacterial ribosomal protein bL25 family. CTC subfamily. In terms of assembly, part of the 50S ribosomal subunit; part of the 5S rRNA/L5/L18/L25 subcomplex. Contacts the 5S rRNA. Binds to the 5S rRNA independently of L5 and L18.

Functionally, this is one of the proteins that binds to the 5S RNA in the ribosome where it forms part of the central protuberance. This Mycobacterium leprae (strain TN) protein is Large ribosomal subunit protein bL25.